We begin with the raw amino-acid sequence, 417 residues long: Serine hydroxymethyltransferase (417 aa).

Residues leucine 116 and 120-122 contribute to the (6S)-5,6,7,8-tetrahydrofolate site; that span reads GHL. Lysine 225 is subject to N6-(pyridoxal phosphate)lysine.

This sequence belongs to the SHMT family. In terms of assembly, homodimer. Pyridoxal 5'-phosphate serves as cofactor.

The protein resides in the cytoplasm. It carries out the reaction (6R)-5,10-methylene-5,6,7,8-tetrahydrofolate + glycine + H2O = (6S)-5,6,7,8-tetrahydrofolate + L-serine. It participates in one-carbon metabolism; tetrahydrofolate interconversion. It functions in the pathway amino-acid biosynthesis; glycine biosynthesis; glycine from L-serine: step 1/1. Catalyzes the reversible interconversion of serine and glycine with tetrahydrofolate (THF) serving as the one-carbon carrier. This reaction serves as the major source of one-carbon groups required for the biosynthesis of purines, thymidylate, methionine, and other important biomolecules. Also exhibits THF-independent aldolase activity toward beta-hydroxyamino acids, producing glycine and aldehydes, via a retro-aldol mechanism. This Hydrogenobaculum sp. (strain Y04AAS1) protein is Serine hydroxymethyltransferase.